Reading from the N-terminus, the 160-residue chain is MAEAAQQEQQNFAIQRIFLKDVSFEAPNSPNMFQKEWNPDVKLDLDTQSRELGEGVYEVILRLTVTVKNEEETAFLCEVQQGGIFTAGQMEEAQLAHCLGAFCPNILFPYARETISSLVVKGTFPQLNLAPANFDALFMNYLQNQASETAEAPAEAPAEA.

This sequence belongs to the SecB family. As to quaternary structure, homotetramer, a dimer of dimers. One homotetramer interacts with 1 SecA dimer.

It localises to the cytoplasm. Functionally, one of the proteins required for the normal export of preproteins out of the cell cytoplasm. It is a molecular chaperone that binds to a subset of precursor proteins, maintaining them in a translocation-competent state. It also specifically binds to its receptor SecA. In Aliivibrio salmonicida (strain LFI1238) (Vibrio salmonicida (strain LFI1238)), this protein is Protein-export protein SecB.